The sequence spans 143 residues: MRVEAIVEVRMTEDRGKVLKALENVFTPMRIEERQSDMGTILVATCEGHKCLEKLRSAIWRQGIQDAARSVISRGIVGEDTVVFSVNKQAAYVGVVSFVTEAGESPLGPITFTVKTNDVRQFIDWLAPRTYRGRVYYEAPPPD.

The protein belongs to the UPF0201 family.

This is UPF0201 protein PAE1632 from Pyrobaculum aerophilum (strain ATCC 51768 / DSM 7523 / JCM 9630 / CIP 104966 / NBRC 100827 / IM2).